A 341-amino-acid chain; its full sequence is Phenylalanine--tRNA ligase alpha subunit (341 aa).

Glu-254 contributes to the Mg(2+) binding site.

It belongs to the class-II aminoacyl-tRNA synthetase family. Phe-tRNA synthetase alpha subunit type 1 subfamily. As to quaternary structure, tetramer of two alpha and two beta subunits. The cofactor is Mg(2+).

It is found in the cytoplasm. The enzyme catalyses tRNA(Phe) + L-phenylalanine + ATP = L-phenylalanyl-tRNA(Phe) + AMP + diphosphate + H(+). The chain is Phenylalanine--tRNA ligase alpha subunit from Chlorobaculum tepidum (strain ATCC 49652 / DSM 12025 / NBRC 103806 / TLS) (Chlorobium tepidum).